We begin with the raw amino-acid sequence, 108 residues long: UPF0060 membrane protein YnfA (108 aa).

Residues 1–5 are Periplasmic-facing; the sequence is MIKTT. Residues 6 to 26 form a helical membrane-spanning segment; that stretch reads LLFFATALCEIIGCFLPWLWL. Topologically, residues 27–30 are cytoplasmic; sequence KRNA. Residues 31–51 traverse the membrane as a helical segment; that stretch reads SIWLLLPAGISLALFVWLLTL. Topologically, residues 52–60 are periplasmic; it reads HPAASGRVY. Residues 61 to 81 traverse the membrane as a helical segment; it reads AAYGGVYVCTALIWLRVVDGV. Residues 82 to 84 are Cytoplasmic-facing; it reads KLT. A helical membrane pass occupies residues 85 to 105; it reads LYDWTGALIALCGMLIIVAGW. At 106–108 the chain is on the periplasmic side; it reads GRT.

It belongs to the UPF0060 family.

Its subcellular location is the cell inner membrane. The chain is UPF0060 membrane protein YnfA from Escherichia coli O127:H6 (strain E2348/69 / EPEC).